The primary structure comprises 522 residues: Mediator of RNA polymerase II transcription subunit 1.2 (522 aa).

A coiled-coil region spans residues 13–40; it reads LLEQRKNQELNIEHIDEEMRLEQVRQAA.

Belongs to the Mediator complex subunit 1 family. In terms of assembly, component of the Mediator complex.

It localises to the nucleus. Component of the Mediator complex, a coactivator involved in the regulated transcription of nearly all RNA polymerase II-dependent genes. Mediator functions as a bridge to convey information from gene-specific regulatory proteins to the basal RNA polymerase II transcription machinery. Mediator is recruited to promoters by direct interactions with regulatory proteins and serves as a scaffold for the assembly of a functional preinitiation complex with RNA polymerase II and the general transcription factors. This chain is Mediator of RNA polymerase II transcription subunit 1.2 (mdt-1.2), found in Caenorhabditis elegans.